A 294-amino-acid polypeptide reads, in one-letter code: Polyketide transferase grgF (294 aa).

Catalysis depends on residues C115, D240, and H269.

The protein belongs to the polyketide transferase af380 family. Homodimer.

The protein operates within secondary metabolite biosynthesis. Its function is as follows. Polyketide transferase; part of the gene cluster that mediates the biosynthesis of gregatin A, a fungal polyketide featuring an alkylated furanone core. The PKS grgA synthesizes C11 and C4 polyketide chains in the presence and absence of the trans-enoyl reductase grgB, respectively. The polyketide transferase grgF is then responsible for the fusion of the two carbon chains to produce the furanone skeleton of gregatin A. GrgF first undergoes a conformational change to an open form, and the active site Cys-115 is acylated by the C11 chain. After the elimination of the phosphopantetheinyl chain, the second polyketide chain of four carbons long is delivered adjacent to the enzyme-bound C11 chain. The catalytic histidine, His-269, deprotonates a proton from C-2 of the long chain, and the resultant carbanion attacks the C-1 carbonyl of the crotonyl group to perform Claisen condensation, by which the phosphopantetheinyl chain is released. Eventually, hydrolysis of the thioester linkage probably by a His-269-activated water molecule completes the reaction to afford the grgF final product. Next, the cytochrome P450 monooxygenase grgG accepts the unstable grgF final product as substrate and performs the oxidative cyclization to furnish the gregatin scaffold and leads to the formation of desmethylgregatin A. Finally, the O-methyltransferase grgD methylates the carboxyl group of desmethylgregatin A to provide gregatin A. The chain is Polyketide transferase grgF from Penicillium sp.